The sequence spans 647 residues: Threonine--tRNA ligase (647 aa).

Residues 1 to 61 form the TGS domain; sequence MIKITFPDGA…EEDGSIEIVT (61 aa). Positions 240–538 are catalytic; the sequence is DHRKLGKELD…LIETYKGAFP (299 aa). Zn(2+) is bound by residues C334, H385, and H515.

The protein belongs to the class-II aminoacyl-tRNA synthetase family. As to quaternary structure, homodimer. Zn(2+) is required as a cofactor.

It localises to the cytoplasm. It catalyses the reaction tRNA(Thr) + L-threonine + ATP = L-threonyl-tRNA(Thr) + AMP + diphosphate + H(+). In terms of biological role, catalyzes the attachment of threonine to tRNA(Thr) in a two-step reaction: L-threonine is first activated by ATP to form Thr-AMP and then transferred to the acceptor end of tRNA(Thr). Also edits incorrectly charged L-seryl-tRNA(Thr). The sequence is that of Threonine--tRNA ligase from Streptococcus pyogenes serotype M4 (strain MGAS10750).